A 487-amino-acid chain; its full sequence is Cysteine--tRNA ligase (487 aa).

Cys-29 lines the Zn(2+) pocket. A 'HIGH' region motif is present at residues 31–41; the sequence is VTVYDVNHVGH. Zn(2+) contacts are provided by Cys-209, His-234, and Glu-238. Residues 266 to 270 carry the 'KMSKS' region motif; sequence KMSKS. Lys-269 is a binding site for ATP.

This sequence belongs to the class-I aminoacyl-tRNA synthetase family. As to quaternary structure, monomer. It depends on Zn(2+) as a cofactor.

The protein localises to the cytoplasm. The enzyme catalyses tRNA(Cys) + L-cysteine + ATP = L-cysteinyl-tRNA(Cys) + AMP + diphosphate. The sequence is that of Cysteine--tRNA ligase from Persephonella marina (strain DSM 14350 / EX-H1).